A 455-amino-acid chain; its full sequence is Probable 1,4-beta-D-glucan cellobiohydrolase A (455 aa).

The N-terminal stretch at 1–17 (MHQRALLFSAFWTAVQA) is a signal peptide. Asn-81 is a glycosylation site (N-linked (GlcNAc...) asparagine). Glu-227 acts as the Nucleophile in catalysis. Glu-232 (proton donor) is an active-site residue. N-linked (GlcNAc...) asparagine glycosylation is present at Asn-285.

This sequence belongs to the glycosyl hydrolase 7 (cellulase C) family.

The protein resides in the secreted. The catalysed reaction is Hydrolysis of (1-&gt;4)-beta-D-glucosidic linkages in cellulose and cellotetraose, releasing cellobiose from the non-reducing ends of the chains.. Its function is as follows. The biological conversion of cellulose to glucose generally requires three types of hydrolytic enzymes: (1) Endoglucanases which cut internal beta-1,4-glucosidic bonds; (2) Exocellobiohydrolases that cut the disaccharide cellobiose from the non-reducing end of the cellulose polymer chain; (3) Beta-1,4-glucosidases which hydrolyze the cellobiose and other short cello-oligosaccharides to glucose. The chain is Probable 1,4-beta-D-glucan cellobiohydrolase A (cbhA) from Aspergillus flavus (strain ATCC 200026 / FGSC A1120 / IAM 13836 / NRRL 3357 / JCM 12722 / SRRC 167).